An 89-amino-acid polypeptide reads, in one-letter code: Large ribosomal subunit protein bL27 (89 aa).

Residues methionine 1–leucine 21 are disordered.

Belongs to the bacterial ribosomal protein bL27 family.

This Rhizobium leguminosarum bv. trifolii (strain WSM2304) protein is Large ribosomal subunit protein bL27.